A 788-amino-acid chain; its full sequence is Cyclin-F (788 aa).

A Nuclear localization signal 1 motif is present at residues 20–28; the sequence is KRRIRRRPR. In terms of domain architecture, F-box spans 29 to 76; that stretch reads NLTILNLPEDALFHILKWLSVGDILAVRAVHSHLKYLVDNHASVWACA. The Cyclin N-terminal domain maps to 291–405; it reads HAVNKQRVFS…EVVSALDGKI (115 aa). 4 short sequence motifs (d box) span residues 310–313, 343–346, 349–352, and 351–354; these read RYIL, RRRL, RYRL, and RLQL. Disordered regions lie at residues 566 to 585 and 700 to 788; these read SARRTKRKRENSLQEDRGSF and TSGY…FLKL. A Nuclear localization signal 2 motif is present at residues 568–574; the sequence is RRTKRKR. The tract at residues 582–766 is PEST; sequence RGSFVTTPTA…ESCAPQQQVK (185 aa). 2 stretches are compositionally biased toward polar residues: residues 700–716 and 723–738; these read TSGYSSVNSASPTDSGR and RSTSELPTGSSLNTQP. The short motif at 767 to 770 is the D box 5 element; it reads RKNL.

It belongs to the cyclin family. Cyclin AB subfamily. In terms of assembly, component of the SCF(CCNF) complex consisting of CUL1, RBX1, SKP1 and CCNF. Interacts with SKP1. Interacts with CUL1. Interacts with CCNB1; interaction is required for nuclear localization of CCNB1. Interacts with CCP110; this interaction leads to CCP110 ubiquitination and degradation via the proteasome pathway. Interacts (via the Cyclin N-terminal domain) with MYBL2/BMYB. Interacts with FZR1/CDH1 (via N-terminus). Interacts with RRM2 (via Cy motif and when phosphorylated at 'Thr-33'); the interaction occurs exclusively in G2 and early M. Interacts with CDC6 (via Cy motif); the interaction takes place during G2 and M phase. Post-translationally, degraded when the spindle assembly checkpoint is activated during the G2-M transition. Degradation is not dependent on the proteasome or ubiquitin and depends on the C-terminal PEST sequence. In terms of processing, phosphorylated just before cells enter into mitosis. Ubiquitinated by the anaphase-promoting complex (APC/C); leading to its degradation by the proteasome.

It is found in the nucleus. It localises to the cytoplasm. The protein localises to the perinuclear region. The protein resides in the cytoskeleton. Its subcellular location is the microtubule organizing center. It is found in the centrosome. It localises to the centriole. Substrate recognition component of a SCF (SKP1-CUL1-F-box protein) E3 ubiquitin-protein ligase complex which mediates the ubiquitination and subsequent proteasomal degradation of target proteins. The SCF(CCNF) E3 ubiquitin-protein ligase complex is an integral component of the ubiquitin proteasome system (UPS) and links proteasome degradation to the cell cycle. Mediates the substrate recognition and the proteasomal degradation of various target proteins involved in the regulation of cell cycle progression and in the maintenance of genome stability. Mediates the ubiquitination and subsequent proteasomal degradation of CP110 during G2 phase, thereby acting as an inhibitor of centrosome reduplication. In G2, mediates the ubiquitination and proteasomal degradation of CDC6, thereby suppressing DNA re-replication and preventing genome instability. Involved in the ubiquitination and degradation of the substrate adapter CDH1 of the anaphase-promoting complex (APC/C), thereby acting as an antagonist of APC/C in regulating G1 progression and S phase entry. May play a role in the G2 cell cycle checkpoint control after DNA damage, possibly by promoting the ubiquitination of MYBL2/BMYB. In Bos taurus (Bovine), this protein is Cyclin-F (CCNF).